The chain runs to 528 residues: Probable protein phosphatase 2C 51 (528 aa).

A helical membrane pass occupies residues Ser-8–Cys-28. Residues Arg-71–Leu-445 form the PPM-type phosphatase domain. The Mn(2+) site is built by Asp-117, Gly-118, Asp-385, and Asp-436.

This sequence belongs to the PP2C family. Mg(2+) is required as a cofactor. The cofactor is Mn(2+).

The protein resides in the membrane. It catalyses the reaction O-phospho-L-seryl-[protein] + H2O = L-seryl-[protein] + phosphate. The enzyme catalyses O-phospho-L-threonyl-[protein] + H2O = L-threonyl-[protein] + phosphate. This chain is Probable protein phosphatase 2C 51, found in Arabidopsis thaliana (Mouse-ear cress).